A 187-amino-acid polypeptide reads, in one-letter code: EP300-interacting inhibitor of differentiation 1 (187 aa).

The tract at residues 1 to 118 (MSEMAELSEL…YDYPEEEQLS (118 aa)) is disordered. Composition is skewed to acidic residues over residues 52-63 (LEEEGPMEEEEA) and 93-116 (FESE…EEEQ). An interaction with NR0B2 region spans residues 54 to 120 (EEGPMEEEEA…YPEEEQLSGA (67 aa)). The LXCXE motif motif lies at 178–182 (LGCDE).

As to quaternary structure, interacts via its LXCXE motif with the entire pocket region of RB1. Interacts with EP300, NR0B2 and TRIM27. Post-translationally, ubiquitinated in U2OS osteosarcoma cells and is rapidly degraded by proteasome as cells exit the cell cycle exit. In terms of tissue distribution, widely expressed. Most abundantly expressed in heart, skeletal muscle, pancreas, brain and testis. Expressed at much lower levels in placenta and peripheral blood leukocyte. Barely detectable in lung. Also weakly expressed in lung carcinoma A-549 and various leukemia cell lines.

The protein resides in the nucleus. Its subcellular location is the cytoplasm. Interacts with RB1 and EP300 and acts as a repressor of MYOD1 transactivation. Inhibits EP300 and CBP histone acetyltransferase activity. May be involved in coupling cell cycle exit to the transcriptional activation of genes required for cellular differentiation. May act as a candidate coinhibitory factor for NR0B2 that can be directly linked to transcription inhibitory mechanisms. The sequence is that of EP300-interacting inhibitor of differentiation 1 from Homo sapiens (Human).